We begin with the raw amino-acid sequence, 600 residues long: MATLRISSALIYQNTLTHHFRLRRPHRFVCKSMTKTTPDTTLVELSRRSGNYQPSPWNHCYLLSIENKYASETEVITRDVLKKKVKSMLDDEKKSRLEQLELIDDLQKLGVSYHFEIEINDTLTDLHLKMGRNCWKCDKEEDLHATSLEFRLLRQHGFDVSENIFDVIIDQIESNTFKTNNINGIISLYEASYLSTKSDTKLHKVIRPFATEQIRKFVDDEDTKNIEVREKAYHALEMPYHWRMRRLDTRWYIDAYEKKHDMNLVLIEFAKIDFNIVQAAHQEDLKYVSRWWKDTCLTNQLPFVRDRIVENYFWTVGLIYEPQFGYIRRIMTIVNALVTTIDDIYDIYGTLEELELFTSMVENWDVNRLGELPEYMRLCFLILYNEINGIGCDILKYKKIDVIPYLKKSWADLCRTYLVEAKWYKRGYKPSLEEYMQNAWISISAPTILIHFYCVFSDQISVQNLETLSQHRQHIVRCSATVLRLANDLGTSPTELARGDVLKSVQCYMHETGASEERARDHVHQMISDMWDDMNSETKTACNSSSRSRGFKEAAMNLARMSQCMYQYGDGHGCPEKAKTIDRVQSLLVDPIPLDVNRLG.

A chloroplast-targeting transit peptide spans 1–31; the sequence is MATLRISSALIYQNTLTHHFRLRRPHRFVCK. Residue D342 participates in dimethylallyl diphosphate binding. D342 and D346 together coordinate Mg(2+). The DDXXD motif motif lies at 342–346; sequence DDIYD. The dimethylallyl diphosphate site is built by E420, R484, and N487. 3 residues coordinate Mg(2+): N487, T491, and E495.

Belongs to the terpene synthase family. Tpsb subfamily. It depends on Mg(2+) as a cofactor. The cofactor is Mn(2+). In terms of tissue distribution, predominantly expressed in roots and at much lower levels in siliques. Not found in leaves, flowers or stems. Also detected in flowers in cv. Landsberg erecta. Not expressed in root apical meristem and elongation zone. Found in the vascular system of young roots and additionally in the cortex and epidermal cell layer of older roots.

It localises to the plastid. The protein resides in the chloroplast. The enzyme catalyses (2E)-geranyl diphosphate + H2O = 1,8-cineole + diphosphate. Its pathway is secondary metabolite biosynthesis; terpenoid biosynthesis. Its function is as follows. Involved in monoterpene (C10) biosynthesis. The major product is 1,8-cineole (52%) followed by minor amounts of sabinene (14.5%), myrcene (13.3%), (-)-(1S)-beta-pinene (7.8%), (-)-(4S)-limonene (4.0%), (E)-beta-ocimene (2.7%), alpha-terpineol (2.4%), (-)-(1S)-alpha-pinene (1.9%), terpinolene (0.8%), and (+)-alpha-thujene (0.6%). This chain is 1,8-cineole synthase 1, chloroplastic (TPS27), found in Arabidopsis thaliana (Mouse-ear cress).